Here is a 323-residue protein sequence, read N- to C-terminus: Fructose-bisphosphate aldolase (323 aa).

S50 is a beta-D-fructose 1,6-bisphosphate binding site. Catalysis depends on D83, which acts as the Proton donor. H84 and H178 together coordinate Zn(2+). Beta-D-fructose 1,6-bisphosphate is bound by residues H178, G179, and K182. Residue H210 coordinates Zn(2+). 7 residues coordinate beta-D-fructose 1,6-bisphosphate: G211, S213, N253, D255, S256, R259, and R280.

Belongs to the class II fructose-bisphosphate aldolase family. As to quaternary structure, homodimer. The cofactor is Zn(2+).

It carries out the reaction beta-D-fructose 1,6-bisphosphate = D-glyceraldehyde 3-phosphate + dihydroxyacetone phosphate. It functions in the pathway carbohydrate degradation; glycolysis; D-glyceraldehyde 3-phosphate and glycerone phosphate from D-glucose: step 4/4. Its function is as follows. Plays a key role in glycolysis by catalyzing the cleavage of fructose 1,6-bisphosphate into dihydroxyacetone phosphate and glyceraldehyde 3-phosphate. Does not cleave D-tagatose-1,6-bisphosphate. The chain is Fructose-bisphosphate aldolase from Giardia intestinalis (strain ATCC 50803 / WB clone C6) (Giardia lamblia).